A 293-amino-acid polypeptide reads, in one-letter code: ATP synthase gamma chain (293 aa).

This sequence belongs to the ATPase gamma chain family. As to quaternary structure, F-type ATPases have 2 components, CF(1) - the catalytic core - and CF(0) - the membrane proton channel. CF(1) has five subunits: alpha(3), beta(3), gamma(1), delta(1), epsilon(1). CF(0) has three main subunits: a, b and c.

Its subcellular location is the cell membrane. In terms of biological role, produces ATP from ADP in the presence of a proton gradient across the membrane. The gamma chain is believed to be important in regulating ATPase activity and the flow of protons through the CF(0) complex. The chain is ATP synthase gamma chain from Streptococcus agalactiae serotype III (strain NEM316).